We begin with the raw amino-acid sequence, 304 residues long: GS homeobox 2 (304 aa).

A disordered region spans residues 116 to 151 (AQFCPRVNHAHHHHHPPQHHHHHHQPQQPGSAAAAA). Residues 123 to 140 (NHAHHHHHPPQHHHHHHQ) are compositionally biased toward basic residues. Residues 141 to 151 (PQQPGSAAAAA) are compositionally biased toward low complexity. Positions 202–261 (GKRMRTAFTSTQLLELEREFSSNMYLSRLRRIEIATYLNLSEKQVKIWFQNRRVKHKKEG) form a DNA-binding region, homeobox. Residues 283–304 (RSEDEDSLSPASANDDKEISPL) form a disordered region.

The protein belongs to the Antp homeobox family.

Its subcellular location is the nucleus. It is found in the cytoplasm. Functionally, transcription factor that binds 5'-CNAATTAG-3' DNA sequence and regulates the expression of numerous genes including genes important for brain development. During telencephalic development, causes ventralization of pallial progenitors and, depending on the developmental stage, specifies different neuronal fates. At early stages, necessary and sufficient to correctly specify the ventral lateral ganglionic eminence (LGE) and its major derivatives, the striatal projection neurons. At later stages, may specify LGE progenitors toward dorsal LGE fates, including olfactory bulb interneurons. In Homo sapiens (Human), this protein is GS homeobox 2 (GSX2).